Here is a 505-residue protein sequence, read N- to C-terminus: Probable Xaa-Pro aminopeptidase Pc16g13390 (505 aa).

Positions 287, 298, 436, and 475 each coordinate Mn(2+).

It belongs to the peptidase M24B family. It depends on Mn(2+) as a cofactor.

The enzyme catalyses Release of any N-terminal amino acid, including proline, that is linked to proline, even from a dipeptide or tripeptide.. Catalyzes the removal of a penultimate prolyl residue from the N-termini of peptides. This is Probable Xaa-Pro aminopeptidase Pc16g13390 from Penicillium rubens (strain ATCC 28089 / DSM 1075 / NRRL 1951 / Wisconsin 54-1255) (Penicillium chrysogenum).